We begin with the raw amino-acid sequence, 181 residues long: Small ribosomal subunit protein uS4 (181 aa).

The 63-residue stretch at 104–166 (RRLQTIVYKK…VTSSFKSRPP (63 aa)) folds into the S4 RNA-binding domain.

This sequence belongs to the universal ribosomal protein uS4 family. In terms of assembly, part of the 30S ribosomal subunit. Contacts protein S5. The interaction surface between S4 and S5 is involved in control of translational fidelity.

In terms of biological role, one of the primary rRNA binding proteins, it binds directly to 16S rRNA where it nucleates assembly of the body of the 30S subunit. Its function is as follows. With S5 and S12 plays an important role in translational accuracy. This chain is Small ribosomal subunit protein uS4, found in Saccharolobus islandicus (strain Y.N.15.51 / Yellowstone #2) (Sulfolobus islandicus).